The chain runs to 433 residues: Tubulin epsilon and delta complex protein 2 (433 aa).

Disordered regions lie at residues 45 to 69 (TGTR…ACTP), 95 to 169 (TKAG…VGMG), and 326 to 345 (QPPR…SCGG). The span at 107-120 (KSRSIVTSSGTTAS) shows a compositional bias: polar residues. Position 159 is a phosphoserine (serine 159). Residues 327–339 (PPRPCPVGRPPGA) show a composition bias toward pro residues.

Interacts with TEDC1. Found in a complex with TEDC1, TEDC2, TUBE1 and TUBD1.

It is found in the cell projection. The protein resides in the cilium. Its subcellular location is the cytoplasm. It localises to the cytoskeleton. The protein localises to the microtubule organizing center. It is found in the centrosome. The protein resides in the centriole. Functionally, acts as a positive regulator of ciliary hedgehog signaling. Required for centriole stability. In Homo sapiens (Human), this protein is Tubulin epsilon and delta complex protein 2.